The chain runs to 343 residues: Thromboxane A2 receptor (343 aa).

Residues 1 to 29 (MWPNASSLGPCFRPMNITLEERRLIASPW) lie on the Extracellular side of the membrane. N-linked (GlcNAc...) asparagine glycosylation is found at Asn4 and Asn16. The helical transmembrane segment at 30–52 (FAASFCLVGLASNLLALSVLMGA) threads the bilayer. Topologically, residues 53–66 (RQGSSQSRSSFLTF) are cytoplasmic. Residues 67-87 (LCGLVLTDFMGLLVTGAIVVT) traverse the membrane as a helical segment. Topologically, residues 88–106 (QHFVLFEWQAVDPGCSLCH) are extracellular. Cys105 and Cys183 form a disulfide bridge. Residues 107–128 (FMGVIMVFFGLCPLLLGAAMAS) form a helical membrane-spanning segment. Topologically, residues 129–149 (ERFLGITRPFSRPATASQRRA) are cytoplasmic. Residues 150-172 (WTTVGLVWASALALGLLPLLGVG) form a helical membrane-spanning segment. Topologically, residues 173-193 (HYTVQYPGSWCFLTLGTDPGD) are extracellular. Residues 194–219 (VAFGLLFALLGSISVGMSFLLNTISV) traverse the membrane as a helical segment. At 220-246 (ATLCHVYHGQATAQQRPRDCEVEMMVQ) the chain is on the cytoplasmic side. Residues 247-270 (LMGIMVVASICWMPLLVFIAQTVL) form a helical membrane-spanning segment. Residues 271–289 (QSPPAMSPTGQLSRLTERQ) are Extracellular-facing. Residues 290–311 (LLIYLRVATWNQILDPWVYILF) traverse the membrane as a helical segment. Residues 312-343 (RRAVIQRFYPRLSTRSRSLSLQPQLTRRSTIH) lie on the Cytoplasmic side of the membrane. 2 positions are modified to phosphoserine: Ser329 and Ser331.

Belongs to the G-protein coupled receptor 1 family. In terms of assembly, interacts with RPGRIP1L. Interacts with RACK1; the interaction regulates TBXA2R cell surface expression.

It is found in the cell membrane. Receptor for thromboxane A2 (TXA2), a potent stimulator of platelet aggregation. The activity of this receptor is mediated by a G-protein that activates a phosphatidylinositol-calcium second messenger system. In the kidney, the binding of TXA2 to glomerular TP receptors causes intense vasoconstriction. Activates phospholipase C and adenylyl cyclase. This chain is Thromboxane A2 receptor (TBXA2R), found in Bos taurus (Bovine).